We begin with the raw amino-acid sequence, 172 residues long: Adenine phosphoribosyltransferase (172 aa).

It belongs to the purine/pyrimidine phosphoribosyltransferase family. As to quaternary structure, homodimer.

Its subcellular location is the cytoplasm. It catalyses the reaction AMP + diphosphate = 5-phospho-alpha-D-ribose 1-diphosphate + adenine. Its pathway is purine metabolism; AMP biosynthesis via salvage pathway; AMP from adenine: step 1/1. Functionally, catalyzes a salvage reaction resulting in the formation of AMP, that is energically less costly than de novo synthesis. The chain is Adenine phosphoribosyltransferase from Prochlorococcus marinus (strain MIT 9211).